Consider the following 89-residue polypeptide: uncharacterized protein (89 aa).

It to Synechocystis PCC 6803 slr1025.

This is an uncharacterized protein from Ureaplasma parvum serovar 3 (strain ATCC 700970).